Here is a 513-residue protein sequence, read N- to C-terminus: Maturase K (513 aa).

This sequence belongs to the intron maturase 2 family. MatK subfamily.

The protein localises to the plastid. It is found in the chloroplast. In terms of biological role, usually encoded in the trnK tRNA gene intron. Probably assists in splicing its own and other chloroplast group II introns. This chain is Maturase K, found in Panicum capillare (Witchgrass).